A 252-amino-acid chain; its full sequence is uncharacterized protein (252 aa).

The 143-residue stretch at Phe-96–Ala-238 folds into the Clp R domain. Repeat regions lie at residues Phe-99 to Thr-164 and Phe-172 to Ala-238.

Belongs to the ClpA/ClpB family. ClpC subfamily.

This is an uncharacterized protein from Mycobacterium bovis (strain ATCC BAA-935 / AF2122/97).